A 407-amino-acid chain; its full sequence is Na(+)-translocating NADH-quinone reductase subunit F (407 aa).

A helical transmembrane segment spans residues 6-26 (IFLAIGMFTAIVLGLVAIILV). Residues 35-127 (GDVTIQINGE…DMQIRVPEEV (93 aa)) form the 2Fe-2S ferredoxin-type domain. [2Fe-2S] cluster is bound by residues cysteine 70, cysteine 76, cysteine 79, and cysteine 111. Residues 130-269 (VKKWECTVES…YGPFGEFFAK (140 aa)) enclose the FAD-binding FR-type domain.

The protein belongs to the NqrF family. Composed of six subunits; NqrA, NqrB, NqrC, NqrD, NqrE and NqrF. It depends on [2Fe-2S] cluster as a cofactor. FAD is required as a cofactor.

It localises to the cell inner membrane. The catalysed reaction is a ubiquinone + n Na(+)(in) + NADH + H(+) = a ubiquinol + n Na(+)(out) + NAD(+). In terms of biological role, NQR complex catalyzes the reduction of ubiquinone-1 to ubiquinol by two successive reactions, coupled with the transport of Na(+) ions from the cytoplasm to the periplasm. The first step is catalyzed by NqrF, which accepts electrons from NADH and reduces ubiquinone-1 to ubisemiquinone by a one-electron transfer pathway. The polypeptide is Na(+)-translocating NADH-quinone reductase subunit F (Pseudomonas aeruginosa (strain UCBPP-PA14)).